The following is a 362-amino-acid chain: MRDETPEQPAPLRFGYTTGSCATATSLAAARLLLTGHASDMVDIVLPKGQHVAMRLAFCRATDGGAEAGTIKDAGDDPDVTHGALVFARVRLVHEPGVRFRAGPGVGTVTRAGLTIGVGEPAINPVPRRMMTEHLAALAAEHGYAGGFEVAIGVENGEALARKTMNPRLGIVGGLSILGTTGIVRPFSCSAYIASIHQGIDVARANGVTHIAACTGNASEDAVRARYGLPDIALIEMGDFAGAVLKYLRRASVERLTLCGGFGKLSKLAAGHLDLHSRHSSIDLPRLAQWAGEAGASAVLQHEIRAANTSQQALSLALAHHVPLGDVVCAHARRVARDIVPDEVDVETLAIDREGRIVGVAR.

Belongs to the CbiD family.

The enzyme catalyses Co-precorrin-5B + S-adenosyl-L-methionine = Co-precorrin-6A + S-adenosyl-L-homocysteine. The protein operates within cofactor biosynthesis; adenosylcobalamin biosynthesis; cob(II)yrinate a,c-diamide from sirohydrochlorin (anaerobic route): step 6/10. Catalyzes the methylation of C-1 in cobalt-precorrin-5B to form cobalt-precorrin-6A. The protein is Cobalt-precorrin-5B C(1)-methyltransferase of Burkholderia thailandensis (strain ATCC 700388 / DSM 13276 / CCUG 48851 / CIP 106301 / E264).